A 215-amino-acid polypeptide reads, in one-letter code: UPF0502 protein YceH (215 aa).

This sequence belongs to the UPF0502 family.

The sequence is that of UPF0502 protein YceH from Salmonella schwarzengrund (strain CVM19633).